The following is a 174-amino-acid chain: Gamma-crystallin C (174 aa).

Beta/gamma crystallin 'Greek key' domains lie at G2 to S40 and G41 to P83. C23 carries the post-translational modification S-methylcysteine. The segment at Q84–S87 is connecting peptide. 2 consecutive Beta/gamma crystallin 'Greek key' domains span residues H88–E128 and G129–V171.

The protein belongs to the beta/gamma-crystallin family. Monomer.

Functionally, crystallins are the dominant structural components of the vertebrate eye lens. The chain is Gamma-crystallin C (CRYGC) from Homo sapiens (Human).